The following is a 267-amino-acid chain: Putative ABC transporter permease protein MJ0413 (267 aa).

A run of 7 helical transmembrane segments spans residues 18–38 (VLKI…AIYI), 48–68 (EAVI…GSLI), 78–98 (VISG…LMGY), 115–135 (PIPP…GEMS), 136–156 (MIFI…ISGV), 188–208 (PSIL…VVAA), and 228–248 (LSRM…GLVL). Residues 71 to 252 (TIISIKRVIS…LIGLVLDRGL (182 aa)) form the ABC transmembrane type-1 domain.

Belongs to the binding-protein-dependent transport system permease family. CysTW subfamily.

The protein localises to the cell membrane. Its function is as follows. Probably part of a binding-protein-dependent transport system. Probably responsible for the translocation of the substrate across the membrane. This chain is Putative ABC transporter permease protein MJ0413, found in Methanocaldococcus jannaschii (strain ATCC 43067 / DSM 2661 / JAL-1 / JCM 10045 / NBRC 100440) (Methanococcus jannaschii).